The following is a 235-amino-acid chain: RNA pyrophosphohydrolase (235 aa).

Residues Gly6–Thr149 enclose the Nudix hydrolase domain. The Nudix box motif lies at Gly38–Gly59. Residues Ala184–Thr235 form a disordered region.

It belongs to the Nudix hydrolase family. RppH subfamily. Requires a divalent metal cation as cofactor.

Its function is as follows. Accelerates the degradation of transcripts by removing pyrophosphate from the 5'-end of triphosphorylated RNA, leading to a more labile monophosphorylated state that can stimulate subsequent ribonuclease cleavage. This Polaromonas naphthalenivorans (strain CJ2) protein is RNA pyrophosphohydrolase.